A 208-amino-acid chain; its full sequence is Small ribosomal subunit protein uS5 (208 aa).

Positions 1 to 38 (MPGRERRDGGRSADDNQKKNDRRGGRRDDRRNQQQDER) are disordered. Residues 41–104 (YIERVVTINR…EEARKNFFRV (64 aa)) form the S5 DRBM domain.

It belongs to the universal ribosomal protein uS5 family. Part of the 30S ribosomal subunit. Contacts proteins S4 and S8.

With S4 and S12 plays an important role in translational accuracy. Its function is as follows. Located at the back of the 30S subunit body where it stabilizes the conformation of the head with respect to the body. This is Small ribosomal subunit protein uS5 from Corynebacterium diphtheriae (strain ATCC 700971 / NCTC 13129 / Biotype gravis).